We begin with the raw amino-acid sequence, 207 residues long: Transcriptional regulator GfcR (207 aa).

It belongs to the purine/pyrimidine phosphoribosyltransferase family. GfcR subfamily.

This is Transcriptional regulator GfcR from Methanocella arvoryzae (strain DSM 22066 / NBRC 105507 / MRE50).